Here is a 322-residue protein sequence, read N- to C-terminus: N-acetyl-gamma-glutamyl-phosphate reductase (322 aa).

C132 is an active-site residue.

This sequence belongs to the NAGSA dehydrogenase family. Type 1 subfamily.

The protein resides in the cytoplasm. The catalysed reaction is N-acetyl-L-glutamate 5-semialdehyde + phosphate + NADP(+) = N-acetyl-L-glutamyl 5-phosphate + NADPH + H(+). Its pathway is amino-acid biosynthesis; L-arginine biosynthesis; N(2)-acetyl-L-ornithine from L-glutamate: step 3/4. Catalyzes the NADPH-dependent reduction of N-acetyl-5-glutamyl phosphate to yield N-acetyl-L-glutamate 5-semialdehyde. The polypeptide is N-acetyl-gamma-glutamyl-phosphate reductase (Phocaeicola vulgatus (strain ATCC 8482 / DSM 1447 / JCM 5826 / CCUG 4940 / NBRC 14291 / NCTC 11154) (Bacteroides vulgatus)).